Here is a 302-residue protein sequence, read N- to C-terminus: tRNA dimethylallyltransferase (302 aa).

An ATP-binding site is contributed by Gly2–Ser9. Thr4 to Ser9 serves as a coordination point for substrate. Interaction with substrate tRNA stretches follow at residues Asp27–Leu30 and Gln149–Arg153.

It belongs to the IPP transferase family. Monomer. Requires Mg(2+) as cofactor.

It catalyses the reaction adenosine(37) in tRNA + dimethylallyl diphosphate = N(6)-dimethylallyladenosine(37) in tRNA + diphosphate. Its function is as follows. Catalyzes the transfer of a dimethylallyl group onto the adenine at position 37 in tRNAs that read codons beginning with uridine, leading to the formation of N6-(dimethylallyl)adenosine (i(6)A). The chain is tRNA dimethylallyltransferase from Buchnera aphidicola subsp. Acyrthosiphon pisum (strain 5A).